The primary structure comprises 224 residues: Peptidyl-tRNA hydrolase (224 aa).

Y27 contacts tRNA. The active-site Proton acceptor is H32. Residues Y78, N80, and N126 each contribute to the tRNA site. Residues L203 to P215 are compositionally biased toward low complexity. Residues L203 to S224 are disordered.

Belongs to the PTH family. In terms of assembly, monomer.

The protein resides in the cytoplasm. It catalyses the reaction an N-acyl-L-alpha-aminoacyl-tRNA + H2O = an N-acyl-L-amino acid + a tRNA + H(+). Its function is as follows. Hydrolyzes ribosome-free peptidyl-tRNAs (with 1 or more amino acids incorporated), which drop off the ribosome during protein synthesis, or as a result of ribosome stalling. Functionally, catalyzes the release of premature peptidyl moieties from peptidyl-tRNA molecules trapped in stalled 50S ribosomal subunits, and thus maintains levels of free tRNAs and 50S ribosomes. This chain is Peptidyl-tRNA hydrolase, found in Synechococcus sp. (strain JA-2-3B'a(2-13)) (Cyanobacteria bacterium Yellowstone B-Prime).